Here is a 501-residue protein sequence, read N- to C-terminus: ADP,ATP carrier protein 3 (501 aa).

Helical transmembrane passes span 23 to 43 (LKLFIPMALMMLCILFNFGAL), 59 to 79 (IISFLKLWLVLPSCVIFTVLY), 90 to 110 (YIFYSIVGTFLLFFLLFAYII), 146 to 166 (YALMYIFSELWSAVVINLMFW), 183 to 203 (PVLGMIGNIGLIIAGSVLVFF), 227 to 247 (IILQPIISIIVTAGIIAMFLF), 293 to 313 (IALLIICYGLLINIVEGPWKA), 326 to 346 (VNFMGMFNIWMGISCVTFMII), 361 to 381 (LLTPIMLSITGFIFFIFIIFI), 383 to 403 (EIGTCFGDFNLLYVAIIVGAI), 446 to 466 (FGKSLGAFIQSLIFIIIPTAT), and 470 to 490 (IIIYLLVIFIVMMNLWIWNII).

Belongs to the ADP/ATP translocase tlc family.

It localises to the cell membrane. Functionally, provides the rickettsial cell with host ATP in exchange for rickettsial ADP. This is an obligate exchange system. This energy acquiring activity is an important component of rickettsial parasitism. The sequence is that of ADP,ATP carrier protein 3 (tlcC) from Rickettsia typhi (strain ATCC VR-144 / Wilmington).